The primary structure comprises 481 residues: Glutamate--tRNA ligase (481 aa).

The short motif at Pro-28–Gly-38 is the 'HIGH' region element. Over residues Arg-139–Pro-148 the composition is skewed to basic and acidic residues. The tract at residues Arg-139–Arg-159 is disordered. The short motif at Lys-260–Arg-264 is the 'KMSKS' region element. Lys-263 is a binding site for ATP.

The protein belongs to the class-I aminoacyl-tRNA synthetase family. Glutamate--tRNA ligase type 1 subfamily. As to quaternary structure, monomer.

It is found in the cytoplasm. The enzyme catalyses tRNA(Glu) + L-glutamate + ATP = L-glutamyl-tRNA(Glu) + AMP + diphosphate. Catalyzes the attachment of glutamate to tRNA(Glu) in a two-step reaction: glutamate is first activated by ATP to form Glu-AMP and then transferred to the acceptor end of tRNA(Glu). This Bordetella bronchiseptica (strain ATCC BAA-588 / NCTC 13252 / RB50) (Alcaligenes bronchisepticus) protein is Glutamate--tRNA ligase.